We begin with the raw amino-acid sequence, 700 residues long: Peroxisomal acyl-coenzyme A oxidase 3 (700 aa).

Alanine 2 carries the post-translational modification N-acetylalanine. Threonine 281 carries the phosphothreonine modification. The short motif at 698 to 700 (SKL) is the Microbody targeting signal element.

Belongs to the acyl-CoA oxidase family. FAD serves as cofactor.

It localises to the peroxisome. It catalyses the reaction a 2,3-saturated acyl-CoA + O2 = a (2E)-enoyl-CoA + H2O2. The catalysed reaction is (2S)-pristanoyl-CoA + O2 = (2E)-pristenoyl-CoA + H2O2. The enzyme catalyses tetracosanoyl-CoA + O2 = (2E)-tetracosenoyl-CoA + H2O2. It carries out the reaction hexadecanoyl-CoA + O2 = (2E)-hexadecenoyl-CoA + H2O2. It catalyses the reaction hexadecanedioyl-CoA + O2 = (2E)-hexadecenedioyl-CoA + H2O2. It functions in the pathway lipid metabolism; peroxisomal fatty acid beta-oxidation. Its function is as follows. Oxidizes the CoA-esters of 2-methyl-branched fatty acids. The protein is Peroxisomal acyl-coenzyme A oxidase 3 (ACOX3) of Homo sapiens (Human).